We begin with the raw amino-acid sequence, 327 residues long: Ribosomal RNA small subunit methyltransferase H (327 aa).

Residues 36-38 (GGH), Asp-61, Phe-88, Asp-114, and Gln-121 contribute to the S-adenosyl-L-methionine site.

Belongs to the methyltransferase superfamily. RsmH family.

Its subcellular location is the cytoplasm. The catalysed reaction is cytidine(1402) in 16S rRNA + S-adenosyl-L-methionine = N(4)-methylcytidine(1402) in 16S rRNA + S-adenosyl-L-homocysteine + H(+). In terms of biological role, specifically methylates the N4 position of cytidine in position 1402 (C1402) of 16S rRNA. In Chlorobium luteolum (strain DSM 273 / BCRC 81028 / 2530) (Pelodictyon luteolum), this protein is Ribosomal RNA small subunit methyltransferase H.